The sequence spans 355 residues: MSGISAQLVKKLRDLTDAGMMDCKKALVEVAGDLQKAIDFLREKGLSKAAKKADRIAAEGVVALEVAPDFKSAMIVEINSETDFVAKNEGFKELVKKTLETIKAHNIHTTEELLKSPLDNKPFEEYLHSQIAVIGENILVRKIAHLKAPSSHIINGYAHSNARVGVLIGIKYDNEKNAPKVVELARNIAMHAAAMKPQVLDCKDFSLDFVKKETLALIAEIEKDNEEAKRLGKPLKNIPTFGSRIELSDEVLAHQKKAFEDELKAQGKPEKIWDKIVPGKMERFIADNTLIDQRLTLLGQFYVMDDKKTIAQVVADCSKEWNDDLKITEYVRFELGEGIEKKAENFAEEVALQMK.

The interval 82-85 (TDFV) is involved in Mg(2+) ion dislocation from EF-Tu.

It belongs to the EF-Ts family.

Its subcellular location is the cytoplasm. Associates with the EF-Tu.GDP complex and induces the exchange of GDP to GTP. It remains bound to the aminoacyl-tRNA.EF-Tu.GTP complex up to the GTP hydrolysis stage on the ribosome. In Helicobacter pylori (strain ATCC 700392 / 26695) (Campylobacter pylori), this protein is Elongation factor Ts (tsf).